A 223-amino-acid polypeptide reads, in one-letter code: Large ribosomal subunit protein uL6c (223 aa).

The transit peptide at 1-41 (MASSLVSSFQPRSAFLGDRNVFKVSSTPFAQVGYSSKTIEC) directs the protein to the chloroplast.

The protein belongs to the universal ribosomal protein uL6 family. As to quaternary structure, part of the 50S ribosomal subunit.

It is found in the plastid. It localises to the chloroplast. Its function is as follows. This protein binds directly to 23S ribosomal RNA and is located at the aminoacyl-tRNA binding site of the peptidyltransferase center. The sequence is that of Large ribosomal subunit protein uL6c (RPL6) from Arabidopsis thaliana (Mouse-ear cress).